The chain runs to 196 residues: MQLKRVAEAKLPTPWGDFLMVGFEELATGHDHVALVYGDISGQTPVLARVHSECLTGDALFSLRCDCGFQLEAALTHIAEEGRGILLYHRQEGRNIGLLNKIRAYALQDQGYDTVEANHQLGFAADERDFTLCADMFKLLGVDEVRLLTNNPKKVEILTEAGINIVERVPLIVGRNPNNEHYLDTKAAKMGHLLGK.

49–53 contributes to the GTP binding site; that stretch reads RVHSE. Residues C54, C65, and C67 each contribute to the Zn(2+) site. GTP-binding positions include Q70, 92–94, and T114; that span reads EGR. D126 acts as the Proton acceptor in catalysis. R128 (nucleophile) is an active-site residue. 2 residues coordinate GTP: T149 and K154.

This sequence belongs to the GTP cyclohydrolase II family. As to quaternary structure, homodimer. Zn(2+) serves as cofactor.

It carries out the reaction GTP + 4 H2O = 2,5-diamino-6-hydroxy-4-(5-phosphoribosylamino)-pyrimidine + formate + 2 phosphate + 3 H(+). It participates in cofactor biosynthesis; riboflavin biosynthesis; 5-amino-6-(D-ribitylamino)uracil from GTP: step 1/4. Its function is as follows. Catalyzes the conversion of GTP to 2,5-diamino-6-ribosylamino-4(3H)-pyrimidinone 5'-phosphate (DARP), formate and pyrophosphate. This is GTP cyclohydrolase-2 from Citrobacter koseri (strain ATCC BAA-895 / CDC 4225-83 / SGSC4696).